Here is a 243-residue protein sequence, read N- to C-terminus: Terpene cyclase dpasB (243 aa).

Helical transmembrane passes span 16 to 36 (VVWV…SNYI), 50 to 70 (MALM…FIYP), 79 to 99 (IHTL…RYGA), 112 to 132 (LPVI…AFAE), 141 to 161 (AVSG…QLLC), 172 to 189 (LWLA…PNML), and 207 to 227 (IWFL…LWYV).

Belongs to the paxB family.

The protein resides in the membrane. It functions in the pathway secondary metabolite biosynthesis; terpenoid biosynthesis. Functionally, terpene cyclase; part of the gene cluster that mediates the biosynthesis of the diterpenoid pyrones subglutinols A and B. The first step of the pathway is the synthesis of the alpha-pyrone moiety by the polyketide synthase dpasA via condensation of one acetyl-CoA starter unit with 3 malonyl-CoA units and 2 methylations. The alpha-pyrone is then combined with geranylgeranyl pyrophosphate (GGPP) formed by the GGPP synthase dpasD through the action of the prenyltransferase dpasC to yield a linear alpha-pyrone diterpenoid. Subsequent steps in the diterpenoid pyrone biosynthetic pathway involve the decalin core formation, which is initiated by the epoxidation of the C10-C11 olefin by the FAD-dependent oxidoreductase dpasE, and is followed by a cyclization cascade catalyzed by the terpene cyclase dpasB. The FAD-linked oxidoreductase dpasF is then involved in tetrahydrofuran (THF) ring formation at the C5 unit to complete the formation of subglutinols A and B. DpasF possesses also an additional catalytic ability of multi-step oxidations to generate a new DDP analog with an enone system at the C5 named FDDP A. The protein is Terpene cyclase dpasB of Apiospora sacchari (Arthrinium sacchari).